The sequence spans 1016 residues: S-layer protein A (1016 aa).

Positions 1-30 (MDLSTKKVISAGLVFIYALSLAMLVPMFLA) are cleaved as a signal peptide.

This sequence belongs to the Sulfolobales SlaA family. In terms of assembly, the mushroom-shaped unit cells of the Sulfolobales' S-layers may consist of three SlaB subunits and six SlaA subunits.

It localises to the secreted. The protein resides in the cell wall. The protein localises to the S-layer. S-layer large protein. May form the highly ordered outer sheath. The sequence is that of S-layer protein A from Acidianus ambivalens (Desulfurolobus ambivalens).